A 448-amino-acid chain; its full sequence is Proteases secretion protein PrtE (448 aa).

Residues 1-30 are Cytoplasmic-facing; the sequence is MTGMDITTQDELNEAAMRDRASRDEERALR. The chain crosses the membrane as a helical span at residues 31-50; that stretch reads LGWWLVLAGFGGFLLWALLA. The Periplasmic segment spans residues 51 to 448; it reads PLDKGVAVQG…DRMHLALTEE (398 aa).

It belongs to the membrane fusion protein (MFP) (TC 8.A.1) family.

The protein localises to the cell inner membrane. Involved in the secretion of proteases A, B, C and G. This chain is Proteases secretion protein PrtE (prtE), found in Dickeya chrysanthemi (Pectobacterium chrysanthemi).